The sequence spans 67 residues: Alpha-toxin Bu1 (67 aa).

Residues 3–65 (RDAYIADDKN…VPIRIPGRCR (63 aa)) enclose the LCN-type CS-alpha/beta domain. Intrachain disulfides connect cysteine 13-cysteine 64, cysteine 17-cysteine 37, cysteine 23-cysteine 47, and cysteine 27-cysteine 49. Arginine 65 is modified (arginine amide).

This sequence belongs to the long (4 C-C) scorpion toxin superfamily. Sodium channel inhibitor family. Alpha subfamily. As to expression, expressed by the venom gland.

It localises to the secreted. In terms of biological role, alpha toxins bind voltage-independently at site-3 of sodium channels (Nav) and inhibit the inactivation of the activated channels, thereby blocking neuronal transmission. Since the experiments have been done on F11 cells (immortalized cell line derived from rat DRG neurons mainly expressing Nav1.3/SCN3A, but also Nav1.7/SCN9A and Nav1.2/SCN2A), it is supposed to act on these channels. The slow of inactivation process is partially reversible. Is lethal to mice. The chain is Alpha-toxin Bu1 from Buthacus macrocentrus (Turkish scorpion).